The primary structure comprises 353 residues: Photosystem II protein D1 (353 aa).

Residue Thr2 is modified to N-acetylthreonine. Thr2 bears the Phosphothreonine mark. 3 consecutive transmembrane segments (helical) span residues 29–46 (YIGW…TATS), 118–133 (HFLL…EWEL), and 142–156 (WIAV…AATA). Position 118 (His118) interacts with chlorophyll a. Tyr126 serves as a coordination point for pheophytin a. Asp170 and Glu189 together coordinate [CaMn4O5] cluster. A helical transmembrane segment spans residues 197 to 218 (FHMLGVAGVFGGSLFSAMHGSL). Residue His198 participates in chlorophyll a binding. A quinone-binding positions include His215 and 264-265 (SF). A Fe cation-binding site is contributed by His215. His272 lines the Fe cation pocket. Residues 274–288 (FLAAWPVVGIWFTAL) traverse the membrane as a helical segment. Positions 332, 333, 342, and 344 each coordinate [CaMn4O5] cluster. Residues 345–353 (AIEAPSTNG) constitute a propeptide that is removed on maturation.

This sequence belongs to the reaction center PufL/M/PsbA/D family. As to quaternary structure, PSII is composed of 1 copy each of membrane proteins PsbA, PsbB, PsbC, PsbD, PsbE, PsbF, PsbH, PsbI, PsbJ, PsbK, PsbL, PsbM, PsbT, PsbX, PsbY, PsbZ, Psb30/Ycf12, at least 3 peripheral proteins of the oxygen-evolving complex and a large number of cofactors. It forms dimeric complexes. Requires The D1/D2 heterodimer binds P680, chlorophylls that are the primary electron donor of PSII, and subsequent electron acceptors. It shares a non-heme iron and each subunit binds pheophytin, quinone, additional chlorophylls, carotenoids and lipids. D1 provides most of the ligands for the Mn4-Ca-O5 cluster of the oxygen-evolving complex (OEC). There is also a Cl(-1) ion associated with D1 and D2, which is required for oxygen evolution. The PSII complex binds additional chlorophylls, carotenoids and specific lipids. as cofactor. In terms of processing, tyr-161 forms a radical intermediate that is referred to as redox-active TyrZ, YZ or Y-Z. Post-translationally, C-terminally processed by CTPA; processing is essential to allow assembly of the oxygen-evolving complex and thus photosynthetic growth.

The protein localises to the plastid. It localises to the chloroplast thylakoid membrane. It catalyses the reaction 2 a plastoquinone + 4 hnu + 2 H2O = 2 a plastoquinol + O2. In terms of biological role, photosystem II (PSII) is a light-driven water:plastoquinone oxidoreductase that uses light energy to abstract electrons from H(2)O, generating O(2) and a proton gradient subsequently used for ATP formation. It consists of a core antenna complex that captures photons, and an electron transfer chain that converts photonic excitation into a charge separation. The D1/D2 (PsbA/PsbD) reaction center heterodimer binds P680, the primary electron donor of PSII as well as several subsequent electron acceptors. This chain is Photosystem II protein D1, found in Gossypium barbadense (Sea Island cotton).